We begin with the raw amino-acid sequence, 103 residues long: uncharacterized protein (103 aa).

The next 2 helical transmembrane spans lie at 13–33 (LLPF…YCIL) and 77–97 (FSIY…PYLF).

It is found in the endoplasmic reticulum membrane. This is an uncharacterized protein from Schizosaccharomyces pombe (strain 972 / ATCC 24843) (Fission yeast).